A 237-amino-acid chain; its full sequence is Uridylate kinase (237 aa).

9–12 (KLSG) serves as a coordination point for ATP. Position 51 (Gly51) interacts with UMP. Residues Gly52 and Arg56 each coordinate ATP. UMP is bound by residues Asp71 and 132–139 (CGNPFFTT). ATP contacts are provided by Thr159, Tyr165, and Asp168.

The protein belongs to the UMP kinase family. As to quaternary structure, homohexamer.

It localises to the cytoplasm. It catalyses the reaction UMP + ATP = UDP + ADP. It functions in the pathway pyrimidine metabolism; CTP biosynthesis via de novo pathway; UDP from UMP (UMPK route): step 1/1. Its activity is regulated as follows. Inhibited by UTP. Its function is as follows. Catalyzes the reversible phosphorylation of UMP to UDP. In Prochlorococcus marinus (strain MIT 9303), this protein is Uridylate kinase.